A 194-amino-acid chain; its full sequence is Leucyl/phenylalanyl-tRNA--protein transferase (194 aa).

It belongs to the L/F-transferase family.

The protein localises to the cytoplasm. The enzyme catalyses N-terminal L-lysyl-[protein] + L-leucyl-tRNA(Leu) = N-terminal L-leucyl-L-lysyl-[protein] + tRNA(Leu) + H(+). It carries out the reaction N-terminal L-arginyl-[protein] + L-leucyl-tRNA(Leu) = N-terminal L-leucyl-L-arginyl-[protein] + tRNA(Leu) + H(+). It catalyses the reaction L-phenylalanyl-tRNA(Phe) + an N-terminal L-alpha-aminoacyl-[protein] = an N-terminal L-phenylalanyl-L-alpha-aminoacyl-[protein] + tRNA(Phe). Functionally, functions in the N-end rule pathway of protein degradation where it conjugates Leu, Phe and, less efficiently, Met from aminoacyl-tRNAs to the N-termini of proteins containing an N-terminal arginine or lysine. The polypeptide is Leucyl/phenylalanyl-tRNA--protein transferase (Prosthecochloris aestuarii (strain DSM 271 / SK 413)).